We begin with the raw amino-acid sequence, 215 residues long: Protein C' (215 aa).

The segment at 12 to 34 (MPSFLKKILKLRGRRQEDESRSR) is disordered. Residues 15 to 22 (FLKKILKL) form an involved in self-degradation and in host STAT1 degradation region. Residues 25 to 35 (RRQEDESRSRM) show a composition bias toward basic and acidic residues. The span at 36–66 (LSDSSTQSYQVNQLTSEETEAGSTIPSTPSK) shows a compositional bias: polar residues.

This sequence belongs to the respirovirus protein C family. The different isoforms interact (via C-terminus) with unphosphorylated and phosphorylated human STAT1 (via N-terminus), favoring the formation of parallel STAT1 homodimers. The different isoforms do not interact with host STAT2. C protein interacts with L protein; this interaction has an inhibitory effect on viral transcription and replication. Protein Y1 is produced not only by alternative initiation, but also by proteolytic cleavage of C'. Only alternative initiation is detected in vitro, whereas in vivo cleavage seems to be predominant.

The protein resides in the host cytoplasm. Its function is as follows. The different products prevent the establishment of cellular antiviral state by blocking the interferon-alpha/beta (IFN-alpha/beta) and IFN-gamma signaling pathways. They inhibit IFN-alpha/beta induced tyrosine phosphorylation of STAT1 and STAT2. Blocking the IFN-alpha/beta pathway requires binding to STAT1 in the cytoplasm. They inhibit IFN-gamma induced serine phosphorylation of STAT1. Block the IFN-gamma pathway by binding to and stabilizing the parallel form of the STAT1 dimer, further inducing high-molecular-weight complex formation and inhibition of transcription by IFN-gamma. May also have a role in preventing the cell to enter apoptosis. Modulate regulation of viral transcription and replication. Overexpression inhibits the viral RNA polymerase. The absence of all C', C and Y1 proteins leads to viral delayed growth. Plays an important role in virion particles release. Modulates virion shape. This is Protein C' (P/V/C) from Cavia cutleri (Guinea pig).